Consider the following 218-residue polypeptide: Vacuolar protein-sorting-associated protein 37 homolog 2 (218 aa).

The tract at residues 1-51 is disordered; it reads MFNFWGSKEQQQGQSRPSPEASATPWYSPSLVTSPSSSRPQTSGQIPSHVS. Positions 8–17 are enriched in polar residues; the sequence is KEQQQGQSRP. The segment covering 28–40 has biased composition (low complexity); that stretch reads SPSLVTSPSSSRP. A VPS37 C-terminal domain is found at 137-218; sequence QEKLNELENQ…HLAAKTSSIG (82 aa).

It belongs to the VPS37 family. Component of the endosomal sorting required for transport complex I (ESCRT-I), composed of ELC, VPS28 and VPS37. Interacts with ELC.

It localises to the endosome. Its function is as follows. Component of the ESCRT-I complex (endosomal sorting complex required for transport I), a regulator of vesicular trafficking process. Required for the sorting of endocytic ubiquitinated cargos into multivesicular bodies (MVBs). This Arabidopsis thaliana (Mouse-ear cress) protein is Vacuolar protein-sorting-associated protein 37 homolog 2 (VPS37-2).